An 892-amino-acid chain; its full sequence is Translation initiation factor IF-2 (892 aa).

The disordered stretch occupies residues K88 to A305. 2 stretches are compositionally biased toward basic and acidic residues: residues V93–V159 and D166–K216. Residues G254–K269 are compositionally biased toward basic residues. The span at H270 to A282 shows a compositional bias: basic and acidic residues. A tr-type G domain is found at P391 to K560. The tract at residues G400–T407 is G1. A GTP-binding site is contributed by G400 to T407. The segment at G425–H429 is G2. The segment at D446–G449 is G3. GTP-binding positions include D446 to H450 and N500 to D503. The tract at residues N500 to D503 is G4. Positions S536–K538 are G5.

It belongs to the TRAFAC class translation factor GTPase superfamily. Classic translation factor GTPase family. IF-2 subfamily.

Its subcellular location is the cytoplasm. Functionally, one of the essential components for the initiation of protein synthesis. Protects formylmethionyl-tRNA from spontaneous hydrolysis and promotes its binding to the 30S ribosomal subunits. Also involved in the hydrolysis of GTP during the formation of the 70S ribosomal complex. This is Translation initiation factor IF-2 from Salmonella agona (strain SL483).